The following is a 381-amino-acid chain: Alkanesulfonate monooxygenase (381 aa).

The protein belongs to the SsuD family. Homotetramer.

It carries out the reaction an alkanesulfonate + FMNH2 + O2 = an aldehyde + FMN + sulfite + H2O + 2 H(+). Functionally, catalyzes the desulfonation of aliphatic sulfonates. The protein is Alkanesulfonate monooxygenase of Escherichia fergusonii (strain ATCC 35469 / DSM 13698 / CCUG 18766 / IAM 14443 / JCM 21226 / LMG 7866 / NBRC 102419 / NCTC 12128 / CDC 0568-73).